Here is a 441-residue protein sequence, read N- to C-terminus: MRIFFFAYVLPTVISLLLGCQGAIAALGVDITKGNTEKVKISVAPMHSSTNLEKEIGKSCIRVMLRDLNSTGIFDASWKLPAGGFSTTSEGMPDSNAWTSVAKDVLVTGSIKEFAQGRVKVKLFIWDVASGRQLSGKSFNFATGNWRRAAHSMSDSIYSRITGEGGYFNTRIAYVAETGLPGSRRIAIMDQDGANNIYITGRGEFVSTPRFSPDARNLVYMSYAKSGGSVVLHDLETGYSTALGGVRGVNSSPRFSPDGRHVLLSESAQGSTNIYSIDLKSGKSTRLTNDRSINTSASYSPDKKSIVFNSDRSGRPQLYVMNADGTNQRRISSGKGGYSAPAWSPRGDWIAFTKTEGKSFHVGVMKPDGSGERLLAKGYMVDSPSWSPNGRVILFTQQDPPSATHPFRSRLVTVDITGTNTQILDVPTNASNAHWSPVLRE.

The N-terminal stretch at 1-25 (MRIFFFAYVLPTVISLLLGCQGAIA) is a signal peptide.

The protein belongs to the TolB family. In terms of assembly, the Tol-Pal system is composed of five core proteins: the inner membrane proteins TolA, TolQ and TolR, the periplasmic protein TolB and the outer membrane protein Pal. They form a network linking the inner and outer membranes and the peptidoglycan layer.

It is found in the periplasm. Part of the Tol-Pal system, which plays a role in outer membrane invagination during cell division and is important for maintaining outer membrane integrity. The protein is Tol-Pal system protein TolB of Anaplasma marginale (strain St. Maries).